Consider the following 456-residue polypeptide: Phosphomannomutase (456 aa).

Residue S98 is the Phosphoserine intermediate of the active site. Residues S98, D245, D247, and D249 each contribute to the Mg(2+) site.

Belongs to the phosphohexose mutase family. It depends on Mg(2+) as a cofactor.

It catalyses the reaction alpha-D-mannose 1-phosphate = D-mannose 6-phosphate. Its pathway is nucleotide-sugar biosynthesis; GDP-alpha-D-mannose biosynthesis; alpha-D-mannose 1-phosphate from D-fructose 6-phosphate: step 2/2. It functions in the pathway bacterial outer membrane biogenesis; LPS O-antigen biosynthesis. Functionally, involved in GDP-mannose biosynthesis which serves as the activated sugar nucleotide precursor for mannose residues in cell surface polysaccharides. This enzyme participates in synthesis of the LPS O antigen. The sequence is that of Phosphomannomutase (manB) from Salmonella montevideo.